We begin with the raw amino-acid sequence, 253 residues long: 5'/3'-nucleotidase SurE (253 aa).

Asp8, Asp9, Ser39, and Asn92 together coordinate a divalent metal cation.

Belongs to the SurE nucleotidase family. It depends on a divalent metal cation as a cofactor.

Its subcellular location is the cytoplasm. It carries out the reaction a ribonucleoside 5'-phosphate + H2O = a ribonucleoside + phosphate. The catalysed reaction is a ribonucleoside 3'-phosphate + H2O = a ribonucleoside + phosphate. It catalyses the reaction [phosphate](n) + H2O = [phosphate](n-1) + phosphate + H(+). Functionally, nucleotidase with a broad substrate specificity as it can dephosphorylate various ribo- and deoxyribonucleoside 5'-monophosphates and ribonucleoside 3'-monophosphates with highest affinity to 3'-AMP. Also hydrolyzes polyphosphate (exopolyphosphatase activity) with the preference for short-chain-length substrates (P20-25). Might be involved in the regulation of dNTP and NTP pools, and in the turnover of 3'-mononucleotides produced by numerous intracellular RNases (T1, T2, and F) during the degradation of various RNAs. This is 5'/3'-nucleotidase SurE from Shigella dysenteriae serotype 1 (strain Sd197).